The primary structure comprises 718 residues: Probable GTP diphosphokinase RSH2, chloroplastic (718 aa).

Residues 1–68 (MSVPAIAVYT…LFSSPTAAPR (68 aa)) constitute a chloroplast transit peptide. The tract at residues 9–48 (YTSPPGAVYTSSSSSELEASSRGSAPCATAAPPSPASSHR) is disordered. The span at 19–39 (SSSSSELEASSRGSAPCATAA) shows a compositional bias: low complexity. The HD domain occupies 243–347 (YLQHCVETAV…IKLADRLHNM (105 aa)).

Belongs to the RelA/SpoT family.

Its subcellular location is the plastid. It is found in the chloroplast. The enzyme catalyses GTP + ATP = guanosine 3'-diphosphate 5'-triphosphate + AMP. Functionally, probable ppGpp (guanosine 3'-diphosphate 5'-diphosphate) synthetase that may be involved in a rapid plant ppGpp-mediated response to pathogens and other stresses. The chain is Probable GTP diphosphokinase RSH2, chloroplastic (RSH2) from Oryza sativa subsp. japonica (Rice).